We begin with the raw amino-acid sequence, 341 residues long: Glyceraldehyde-3-phosphate dehydrogenase 2 (341 aa).

NAD(+) is bound by residues 12–13, Arg78, and Thr120; that span reads RI. Residues 152–154 and Thr183 each bind D-glyceraldehyde 3-phosphate; that span reads SCT. Cys153 (nucleophile) is an active-site residue. Asn184 provides a ligand contact to NAD(+). D-glyceraldehyde 3-phosphate is bound by residues Arg198, 211-212, and Arg234; that span reads TG. Asn313 is a binding site for NAD(+).

The protein belongs to the glyceraldehyde-3-phosphate dehydrogenase family. In terms of assembly, homotetramer.

The protein resides in the cytoplasm. The enzyme catalyses D-glyceraldehyde 3-phosphate + phosphate + NAD(+) = (2R)-3-phospho-glyceroyl phosphate + NADH + H(+). Its pathway is carbohydrate degradation; glycolysis; pyruvate from D-glyceraldehyde 3-phosphate: step 1/5. In terms of biological role, catalyzes the oxidative phosphorylation of glyceraldehyde 3-phosphate (G3P) to 1,3-bisphosphoglycerate (BPG) using the cofactor NAD. The first reaction step involves the formation of a hemiacetal intermediate between G3P and a cysteine residue, and this hemiacetal intermediate is then oxidized to a thioester, with concomitant reduction of NAD to NADH. The reduced NADH is then exchanged with the second NAD, and the thioester is attacked by a nucleophilic inorganic phosphate to produce BPG. This Staphylococcus aureus (strain COL) protein is Glyceraldehyde-3-phosphate dehydrogenase 2 (gapA2).